The chain runs to 59 residues: uncharacterized protein (59 aa).

This is an uncharacterized protein from Bacillus subtilis (strain 168).